A 65-amino-acid polypeptide reads, in one-letter code: Prokaryotic ubiquitin-like protein Pup (65 aa).

Residues 1-13 (MAQEQKQPRKSSE) are compositionally biased toward basic and acidic residues. The interval 1-34 (MAQEQKQPRKSSEADEAVEAVAETDVSERKEALD) is disordered. The ARC ATPase binding stretch occupies residues 21-59 (VAETDVSERKEALDSDVDDILDEIDDVLETNAEDFVKSF). The stretch at 25–49 (DVSERKEALDSDVDDILDEIDDVLE) forms a coiled coil. Glu65 is covalently cross-linked (Isoglutamyl lysine isopeptide (Glu-Lys) (interchain with K-? in acceptor proteins)).

Belongs to the prokaryotic ubiquitin-like protein family. In terms of assembly, strongly interacts with the proteasome-associated ATPase ARC through a hydrophobic interface; the interacting region of Pup lies in its C-terminal half. There is one Pup binding site per ARC hexamer ring.

The protein operates within protein degradation; proteasomal Pup-dependent pathway. Functionally, protein modifier that is covalently attached to lysine residues of substrate proteins, thereby targeting them for proteasomal degradation. The tagging system is termed pupylation. This is Prokaryotic ubiquitin-like protein Pup from Nocardioides sp. (strain ATCC BAA-499 / JS614).